A 230-amino-acid polypeptide reads, in one-letter code: Ribonuclease 3 (230 aa).

An RNase III domain is found at 7–134; it reads LEELESKLGI…VIAAIYLDKG (128 aa). Glutamate 47 lines the Mg(2+) pocket. Aspartate 51 is an active-site residue. The Mg(2+) site is built by aspartate 120 and glutamate 123. Glutamate 123 is a catalytic residue. The 70-residue stretch at 161 to 230 folds into the DRBM domain; the sequence is DYKTRLQEIL…ACKALKGLDN (70 aa).

This sequence belongs to the ribonuclease III family. Homodimer. The cofactor is Mg(2+).

It is found in the cytoplasm. It catalyses the reaction Endonucleolytic cleavage to 5'-phosphomonoester.. Digests double-stranded RNA. Involved in the processing of primary rRNA transcript to yield the immediate precursors to the large and small rRNAs (23S and 16S). Processes some mRNAs, and tRNAs when they are encoded in the rRNA operon. Processes pre-crRNA and tracrRNA of type II CRISPR loci if present in the organism. This is Ribonuclease 3 from Clostridium acetobutylicum (strain ATCC 824 / DSM 792 / JCM 1419 / IAM 19013 / LMG 5710 / NBRC 13948 / NRRL B-527 / VKM B-1787 / 2291 / W).